A 735-amino-acid chain; its full sequence is MYPRHDDVSLFQRFVNDHKLEEKGLPLYQLAQLEGTDQVMLGVDGTKIIDMITQAVREREKMAIYTYTTPYTVYEKINEFRTMFQSIKNCTPVFVFNGIQYSPDSAEEFGREKNVVPSEVAALTGTDSSRLSNTTNVRFAEIHKKTANRFVVEEDVEGQIIRIFRSEFKNTIRAPYLAWAQLSSFRHCNHRHISEVYGCLELLAFPGIDRVVTNINPTRGTFDVVYKARVLEAARLSEEDLSSLILVESRSRVMRTVTLKFSSLEDMIKKVVRYKGSTIGASFAQQLHEEAIRASEANRMRASNQRGAAFRNLSAFASPVLTLTPPHCLPLHFLYGIPGFPHADAESFVGLPLPPVLYYIMSAGLLSPSLFAAVSQETVVDDWPLVDSIKYRDVAETVLPLRVQTIYQLAWTMSRGLGSISWFRRYNVLPARVSKLHVPPAIQLDGWALHSVTVPRGLHLVDVMEFAHLACSVDQVIYNTMEETYAAILLQSLDLLGYLTHETQDLHEEGQSSEPSTFGRALQLCSVPTLSEYTVLLIELARTNAISTEPFRITTEEVSPRDTPRDIVFASRVLSIIPLNVSGPWTAPIDAELAAFSMLSRMISRSIRQLLEAITTLMFSKGRTHVPLHRIGEIQRLLPFSTPVEFGCGVLVEYMLMKDKCTLKDLEEAFPECTYLRHDLATLFYFWDLAVQVLQRIETKENFCVDQHCLSSANERMKRAQKNLNILTGVRETYY.

The interval Gln475–Lys722 is interaction with PBP1.

It belongs to the XPG/RAD2 endonuclease family. As to quaternary structure, forms a complex composed of at least MKT1, PBP1, XAC1 and LSM12. Within the complex, interacts (via C-terminus) with PBP1; the interaction is direct. Interacts with RNA-binding protein ZC3H11 (via MKT1-binding motif); the interaction is direct. May interact with RNA-binding proteins CFB1 and CFB2. Interacts with the EIF4E6-EIF4G5 translation initiation complex via EIF4G5; the interaction with EIF4G5 is direct.

The protein localises to the cytoplasm. It is found in the cytosol. The protein resides in the stress granule. Its function is as follows. Involved in post-transcriptional regulation of gene expression. Promotes mRNA stabilization by recruiting a complex containing PBP1, LSM12 and XAC1 to mRNAs. Recruited to mRNAs by sequence-specific RNA binding proteins. May regulate translation through interactions with the EIF4E6-EIF4G5 translation initiation complex. This Trypanosoma brucei brucei (strain 927/4 GUTat10.1) protein is Post-transcriptional regulator MKT1.